The sequence spans 397 residues: tRNA(Ile)-lysidine synthase (397 aa).

An ATP-binding site is contributed by 44 to 49 (SGGADS).

This sequence belongs to the tRNA(Ile)-lysidine synthase family.

It is found in the cytoplasm. It catalyses the reaction cytidine(34) in tRNA(Ile2) + L-lysine + ATP = lysidine(34) in tRNA(Ile2) + AMP + diphosphate + H(+). Ligates lysine onto the cytidine present at position 34 of the AUA codon-specific tRNA(Ile) that contains the anticodon CAU, in an ATP-dependent manner. Cytidine is converted to lysidine, thus changing the amino acid specificity of the tRNA from methionine to isoleucine. The chain is tRNA(Ile)-lysidine synthase from Rhodopirellula baltica (strain DSM 10527 / NCIMB 13988 / SH1).